An 88-amino-acid chain; its full sequence is UPF0297 protein Bcer98_3100 (88 aa).

Belongs to the UPF0297 family.

In Bacillus cytotoxicus (strain DSM 22905 / CIP 110041 / 391-98 / NVH 391-98), this protein is UPF0297 protein Bcer98_3100.